Here is a 419-residue protein sequence, read N- to C-terminus: Gamma-glutamyl phosphate reductase (419 aa).

This sequence belongs to the gamma-glutamyl phosphate reductase family.

It localises to the cytoplasm. It carries out the reaction L-glutamate 5-semialdehyde + phosphate + NADP(+) = L-glutamyl 5-phosphate + NADPH + H(+). It functions in the pathway amino-acid biosynthesis; L-proline biosynthesis; L-glutamate 5-semialdehyde from L-glutamate: step 2/2. In terms of biological role, catalyzes the NADPH-dependent reduction of L-glutamate 5-phosphate into L-glutamate 5-semialdehyde and phosphate. The product spontaneously undergoes cyclization to form 1-pyrroline-5-carboxylate. This is Gamma-glutamyl phosphate reductase from Caldicellulosiruptor saccharolyticus (strain ATCC 43494 / DSM 8903 / Tp8T 6331).